The following is a 364-amino-acid chain: Glutamine synthetase (364 aa).

One can recognise a GS beta-grasp domain in the interval valine 15–glycine 94. One can recognise a GS catalytic domain in the interval histidine 101–phenylalanine 364.

Belongs to the glutamine synthetase family. Homooctamer.

The protein localises to the cytoplasm. The enzyme catalyses L-glutamate + NH4(+) + ATP = L-glutamine + ADP + phosphate + H(+). This Yarrowia lipolytica (strain CLIB 122 / E 150) (Yeast) protein is Glutamine synthetase (GLN1).